The chain runs to 96 residues: MGNLISTCSFSSRVNSTAKITDSSIWYPQPDQHISIRTFRELNQAPTSSPTSTRTEMFLNGVLSRSTDDLQGEDSRQPMTLTPRQLTQDVSRRLLM.

G2 carries the N-myristoyl glycine; by host lipid modification. The disordered stretch occupies residues 66-96; the sequence is STDDLQGEDSRQPMTLTPRQLTQDVSRRLLM. The span at 77-89 shows a compositional bias: polar residues; it reads QPMTLTPRQLTQD.

This sequence belongs to the geminiviridae protein AC4/C4 family.

It is found in the host cell membrane. Pathogenicity determinant. May act as a suppressor of RNA-mediated gene silencing, also known as post-transcriptional gene silencing (PTGS), a mechanism of plant viral defense that limits the accumulation of viral RNAs. This Solanum lycopersicum (Tomato) protein is Protein C4.